A 298-amino-acid polypeptide reads, in one-letter code: ATP synthase gamma chain (298 aa).

Belongs to the ATPase gamma chain family. As to quaternary structure, F-type ATPases have 2 components, CF(1) - the catalytic core - and CF(0) - the membrane proton channel. CF(1) has five subunits: alpha(3), beta(3), gamma(1), delta(1), epsilon(1). CF(0) has three main subunits: a, b and c.

Its subcellular location is the cell inner membrane. Functionally, produces ATP from ADP in the presence of a proton gradient across the membrane. The gamma chain is believed to be important in regulating ATPase activity and the flow of protons through the CF(0) complex. The polypeptide is ATP synthase gamma chain (Francisella philomiragia subsp. philomiragia (strain ATCC 25017 / CCUG 19701 / FSC 153 / O#319-036)).